Consider the following 266-residue polypeptide: Elongation factor Ts (266 aa).

The involved in Mg(2+) ion dislocation from EF-Tu stretch occupies residues 80-83; it reads TDFV.

Belongs to the EF-Ts family.

It localises to the cytoplasm. Its function is as follows. Associates with the EF-Tu.GDP complex and induces the exchange of GDP to GTP. It remains bound to the aminoacyl-tRNA.EF-Tu.GTP complex up to the GTP hydrolysis stage on the ribosome. This chain is Elongation factor Ts, found in Buchnera aphidicola subsp. Baizongia pistaciae (strain Bp).